Reading from the N-terminus, the 233-residue chain is Homeobox protein not2 (233 aa).

The segment at residues 135–194 (LKRIRTVFTPEQLERLEKEFLKQQYMVGTERVDLASTLNLTETQVKVWFQNRRIKWRKQS) is a DNA-binding region (homeobox). Residues 212–233 (SSDHTDDSRETEEEEDDVDVEL) form a disordered region. Acidic residues predominate over residues 220–233 (RETEEEEDDVDVEL).

As to expression, localized to the dorsal lip of the blastopore (Spemann organizer) during early gastrulation, after which expression continues in tissues derived from the organizer. Expressed in the notochord during mid-gastrulation, the chordoneural hinge, notochord and ventral spinal cord of the tailbud at stage 22, and finally the tip of the tail in the tadpole (stage 35).

The protein localises to the nucleus. Transcriptional repressor. Plays a fundamental role in notochord formation, acting within the mesodermal region. Acts downstream of gsc and upstream of chrd and foxa4-A/pintallavis. This Xenopus laevis (African clawed frog) protein is Homeobox protein not2.